A 484-amino-acid chain; its full sequence is Trigger factor (484 aa).

The PPIase FKBP-type domain maps to glycine 162–proline 243. The disordered stretch occupies residues aspartate 427–glycine 484. Positions aspartate 444–serine 476 are enriched in acidic residues.

Belongs to the FKBP-type PPIase family. Tig subfamily.

The protein resides in the cytoplasm. The catalysed reaction is [protein]-peptidylproline (omega=180) = [protein]-peptidylproline (omega=0). Functionally, involved in protein export. Acts as a chaperone by maintaining the newly synthesized protein in an open conformation. Functions as a peptidyl-prolyl cis-trans isomerase. This is Trigger factor from Mycobacterium marinum (strain ATCC BAA-535 / M).